Reading from the N-terminus, the 348-residue chain is UDP-3-O-acylglucosamine N-acyltransferase (348 aa).

His243 (proton acceptor) is an active-site residue.

Belongs to the transferase hexapeptide repeat family. LpxD subfamily. Homotrimer.

The catalysed reaction is a UDP-3-O-[(3R)-3-hydroxyacyl]-alpha-D-glucosamine + a (3R)-hydroxyacyl-[ACP] = a UDP-2-N,3-O-bis[(3R)-3-hydroxyacyl]-alpha-D-glucosamine + holo-[ACP] + H(+). Its pathway is bacterial outer membrane biogenesis; LPS lipid A biosynthesis. Catalyzes the N-acylation of UDP-3-O-acylglucosamine using 3-hydroxyacyl-ACP as the acyl donor. Is involved in the biosynthesis of lipid A, a phosphorylated glycolipid that anchors the lipopolysaccharide to the outer membrane of the cell. The chain is UDP-3-O-acylglucosamine N-acyltransferase from Hahella chejuensis (strain KCTC 2396).